A 550-amino-acid polypeptide reads, in one-letter code: MSHARDDHQGASQGSQWLSQARTLVQEGTLFNFIRCLLLFQGDSGQKEMTPGKKIPIFVDGVVLNGPQTDVKAGEKFVEEACRLIMEEVVLKATDVNEKVCEWQPPEQLRQLLDLEMRDTGESQDKLLKLCQDVIHFSVKTNHPRFFNQLYAGLDYYSLAARIITEALNPSIYTYEVSPVFLLVEEAVLKKMIECVGWKEGDGIFNPGGSVSNMCAMNLARYRHCPDIKEKGLSGLPRLILFTSAECHYSMKKAASFLGIGTQNVYFVETDGRGKMIPEDLEKQIWQARQEGAVPFLVCATSGTTVLGAFDPLDEIAEVCERHGLWLHVDASWGGSALVSRKHRRLLHGIHRADSVAWNPHKMLMAGIQCSALLVKDKSDLLKKCYSAKATYLFQQDKFYDVSYDTGDKSIQCSRRPDAFKFWMTWKALGTSGLEERVNRAFALSRYLVDEIKKREGFKLLMEPEYTNVCFWYIPPSLREMEEGPEFWRKLSLVAPAIKEKMMKKGSLMLGYQPHRGKVNFFRQVVISPQVSREDMDFLLDEIDSLGRDM.

Lysine 362 is modified (N6-(pyridoxal phosphate)lysine).

The protein belongs to the group II decarboxylase family. As to quaternary structure, homodimer. Requires pyridoxal 5'-phosphate as cofactor. Expressed in skeletal muscles and kidney (at protein level). Expressed in skeletal muscle and weakly in brain. Not expressed in liver or kidney. Expressed in brain, olfactory bulb, liver, muscle and kidney with the highest expression in olfactory bulb and almost not detected in liver (at protein level).

The catalysed reaction is L-aspartate + H(+) = beta-alanine + CO2. It catalyses the reaction 3-sulfino-L-alanine + H(+) = hypotaurine + CO2. It carries out the reaction L-cysteate + H(+) = taurine + CO2. Activated weakly by 0.2-0.4 mM Li(+). Inhibited by bis-carboxymethyl-trithiocarbonate, ethylxanthogenacetic acid and 2,5-disulfoaniline. Catalyzes the decarboxylation of L-aspartate, 3-sulfino-L-alanine (cysteine sulfinic acid), and L-cysteate to beta-alanine, hypotaurine and taurine, respectively. The preferred substrate is L-aspartate. Does not exhibit any decarboxylation activity toward glutamate. The chain is Acidic amino acid decarboxylase GADL1 from Mus musculus (Mouse).